The following is a 240-amino-acid chain: Cytochrome c-551 (240 aa).

Cys-41, Cys-44, His-45, Cys-128, Cys-132, and His-133 together coordinate heme c.

Post-translationally, binds 2 heme c groups per subunit.

The chain is Cytochrome c-551 from Rhodocyclus tenuis (Rhodospirillum tenue).